Consider the following 168-residue polypeptide: Phosphopantetheine adenylyltransferase (168 aa).

Thr10 contributes to the substrate binding site. Residues 10–11 and His18 each bind ATP; that span reads TF. 3 residues coordinate substrate: Lys42, Leu74, and Arg88. Residues 89–91, Glu99, and 124–130 each bind ATP; these read GLR and NSFISST.

Belongs to the bacterial CoaD family. As to quaternary structure, homohexamer. It depends on Mg(2+) as a cofactor.

The protein resides in the cytoplasm. It catalyses the reaction (R)-4'-phosphopantetheine + ATP + H(+) = 3'-dephospho-CoA + diphosphate. It participates in cofactor biosynthesis; coenzyme A biosynthesis; CoA from (R)-pantothenate: step 4/5. Functionally, reversibly transfers an adenylyl group from ATP to 4'-phosphopantetheine, yielding dephospho-CoA (dPCoA) and pyrophosphate. This Shewanella denitrificans (strain OS217 / ATCC BAA-1090 / DSM 15013) protein is Phosphopantetheine adenylyltransferase.